Here is a 479-residue protein sequence, read N- to C-terminus: GTPase Der (479 aa).

2 consecutive EngA-type G domains span residues proline 3–tyrosine 166 and leucine 192–threonine 365. GTP-binding positions include glycine 9–serine 16, aspartate 56–isoleucine 60, asparagine 118–aspartate 121, glycine 198–serine 205, aspartate 245–valine 249, and asparagine 310–aspartate 313. The KH-like domain maps to glutamine 366–valine 450.

The protein belongs to the TRAFAC class TrmE-Era-EngA-EngB-Septin-like GTPase superfamily. EngA (Der) GTPase family. As to quaternary structure, associates with the 50S ribosomal subunit.

In terms of biological role, GTPase that plays an essential role in the late steps of ribosome biogenesis. In Idiomarina loihiensis (strain ATCC BAA-735 / DSM 15497 / L2-TR), this protein is GTPase Der.